A 177-amino-acid polypeptide reads, in one-letter code: Large ribosomal subunit protein uL6 (177 aa).

This sequence belongs to the universal ribosomal protein uL6 family. In terms of assembly, part of the 50S ribosomal subunit.

In terms of biological role, this protein binds to the 23S rRNA, and is important in its secondary structure. It is located near the subunit interface in the base of the L7/L12 stalk, and near the tRNA binding site of the peptidyltransferase center. In Teredinibacter turnerae (strain ATCC 39867 / T7901), this protein is Large ribosomal subunit protein uL6.